The following is a 121-amino-acid chain: SLVELGKMILQETGKNAIPSYGFYGCNCGWGGRGKPKDATDRCCFVHKCCYKKLTDCDPKTDIYSYSWKNKTIICDVNNPCLKEMCECDKAVAICLRENLDTYNKKYRIYPKFLCKKPDTC.

Cystine bridges form between C26–C115, C28–C44, C43–C95, C49–C121, C50–C88, C57–C81, and C75–C86. Residues 105-117 are important for membrane-damaging activities in eukaryotes and bacteria; heparin-binding; sequence KKYRIYPKFLCKK.

It belongs to the phospholipase A2 family. Group II subfamily. K49 sub-subfamily. Homodimer; non-covalently-linked. As to expression, expressed by the venom gland.

It is found in the secreted. Its function is as follows. Snake venom phospholipase A2 (PLA2) that lacks enzymatic inactivity. It shows antibacterial activity against both Gram-negative and Gram-positive bacteria, including methicillin-resistant strains. In vivo, it causes local muscular damage, but no systemic damage (intravenous administration does not elevate plasma creatine kinase). Also causes an inflammatory activity that is demonstrated by mice paw edema induction and pro-inflammatory cytokine IL-6 elevation. A model of myotoxic mechanism has been proposed: an apo Lys49-PLA2 is activated by the entrance of a hydrophobic molecule (e.g. fatty acid) at the hydrophobic channel of the protein leading to a reorientation of a monomer. This reorientation causes a transition between 'inactive' to 'active' states, causing alignment of C-terminal and membrane-docking sites (MDoS) side-by-side and putting the membrane-disruption sites (MDiS) in the same plane, exposed to solvent and in a symmetric position for both monomers. The MDoS region stabilizes the toxin on membrane by the interaction of charged residues with phospholipid head groups. Subsequently, the MDiS region destabilizes the membrane with penetration of hydrophobic residues. This insertion causes a disorganization of the membrane, allowing an uncontrolled influx of ions (i.e. calcium and sodium), and eventually triggering irreversible intracellular alterations and cell death. The polypeptide is Basic phospholipase A2 CoaTx-II (Crotalus lutosus abyssus (Grand Canyon rattlesnake)).